Consider the following 281-residue polypeptide: Pantothenate synthetase (281 aa).

An ATP-binding site is contributed by 30 to 37 (MGNLHQGH). The active-site Proton donor is His37. Gln61 contributes to the (R)-pantoate binding site. Residue Gln61 coordinates beta-alanine. 149–152 (GNKD) serves as a coordination point for ATP. Residue Gln155 coordinates (R)-pantoate. ATP contacts are provided by residues Ile178 and 186-189 (MSSR).

This sequence belongs to the pantothenate synthetase family. In terms of assembly, homodimer.

Its subcellular location is the cytoplasm. It catalyses the reaction (R)-pantoate + beta-alanine + ATP = (R)-pantothenate + AMP + diphosphate + H(+). The protein operates within cofactor biosynthesis; (R)-pantothenate biosynthesis; (R)-pantothenate from (R)-pantoate and beta-alanine: step 1/1. Its function is as follows. Catalyzes the condensation of pantoate with beta-alanine in an ATP-dependent reaction via a pantoyl-adenylate intermediate. This chain is Pantothenate synthetase, found in Shewanella sp. (strain ANA-3).